We begin with the raw amino-acid sequence, 398 residues long: Na(+)/H(+) antiporter NhaA (398 aa).

12 helical membrane-spanning segments follow: residues 8 to 28 (FLQLEAASGIILFFTAVLALI), 59 to 79 (LLLWINDGLMAIFFLLVGMEI), 96 to 116 (LPVIAAIGGMIVPAAMFSFII), 124 to 144 (AGWAIPMATDIAFALGVLSLL), 154 to 174 (VFLLALAIIDDLGAIMVIALF), 177 to 197 (AELHTIPLLFAVALSAMLLML), 202 to 222 (VMLLTPYLIVGALLWLAVLKS), 223 to 243 (GVHATIAGVILGFAIPHIRGA), 261 to 281 (YFILPFFAFANAGLSFSGLSW), 292 to 312 (IIVGLFIGKPLGVMLVSWLAV), 328 to 348 (LFGLSVLCGIGFTMSIFIGGL), and 362 to 382 (LGILFGSLIAAVFGYILLRNA).

The protein belongs to the NhaA Na(+)/H(+) (TC 2.A.33) antiporter family.

The protein localises to the cell inner membrane. The enzyme catalyses Na(+)(in) + 2 H(+)(out) = Na(+)(out) + 2 H(+)(in). Its function is as follows. Na(+)/H(+) antiporter that extrudes sodium in exchange for external protons. The chain is Na(+)/H(+) antiporter NhaA from Tolumonas auensis (strain DSM 9187 / NBRC 110442 / TA 4).